The chain runs to 591 residues: L-fucose isomerase (591 aa).

Catalysis depends on proton acceptor residues E338 and D362. Residues E338, D362, and H529 each coordinate Mn(2+).

It belongs to the L-fucose isomerase family. Mn(2+) serves as cofactor.

It is found in the cytoplasm. The enzyme catalyses L-fucose = L-fuculose. It participates in carbohydrate degradation; L-fucose degradation; L-lactaldehyde and glycerone phosphate from L-fucose: step 1/3. Converts the aldose L-fucose into the corresponding ketose L-fuculose. In Bacteroides thetaiotaomicron (strain ATCC 29148 / DSM 2079 / JCM 5827 / CCUG 10774 / NCTC 10582 / VPI-5482 / E50), this protein is L-fucose isomerase.